The sequence spans 115 residues: U3-lycotoxin-Ls1j (115 aa).

An N-terminal signal peptide occupies residues 1–20 (MKFVLLFGVFLVTLFSYSSA). Residues 21 to 44 (EMLDDFDQADEDELLSLIEKEEAR) constitute a propeptide that is removed on maturation. Disulfide bonds link cysteine 48–cysteine 63, cysteine 55–cysteine 72, cysteine 62–cysteine 87, and cysteine 74–cysteine 85.

The protein belongs to the neurotoxin 19 (CSTX) family. 01 subfamily. As to expression, expressed by the venom gland.

It localises to the secreted. The chain is U3-lycotoxin-Ls1j from Lycosa singoriensis (Wolf spider).